The sequence spans 1406 residues: DNA-directed RNA polymerase subunit beta' (1406 aa).

Residues C70, C72, C85, and C88 each coordinate Zn(2+). Residues D460, D462, and D464 each coordinate Mg(2+). Residues C814, C888, C895, and C898 each coordinate Zn(2+).

The protein belongs to the RNA polymerase beta' chain family. The RNAP catalytic core consists of 2 alpha, 1 beta, 1 beta' and 1 omega subunit. When a sigma factor is associated with the core the holoenzyme is formed, which can initiate transcription. Requires Mg(2+) as cofactor. It depends on Zn(2+) as a cofactor.

It carries out the reaction RNA(n) + a ribonucleoside 5'-triphosphate = RNA(n+1) + diphosphate. DNA-dependent RNA polymerase catalyzes the transcription of DNA into RNA using the four ribonucleoside triphosphates as substrates. In Photorhabdus laumondii subsp. laumondii (strain DSM 15139 / CIP 105565 / TT01) (Photorhabdus luminescens subsp. laumondii), this protein is DNA-directed RNA polymerase subunit beta'.